The primary structure comprises 211 residues: Thiamine-phosphate synthase (211 aa).

4-amino-2-methyl-5-(diphosphooxymethyl)pyrimidine is bound by residues 37-41 (QLRIK) and Asn-69. Mg(2+)-binding residues include Asp-70 and Asp-89. Ser-108 contributes to the 4-amino-2-methyl-5-(diphosphooxymethyl)pyrimidine binding site. Position 134–136 (134–136 (TQT)) interacts with 2-[(2R,5Z)-2-carboxy-4-methylthiazol-5(2H)-ylidene]ethyl phosphate. Position 137 (Lys-137) interacts with 4-amino-2-methyl-5-(diphosphooxymethyl)pyrimidine. 2-[(2R,5Z)-2-carboxy-4-methylthiazol-5(2H)-ylidene]ethyl phosphate contacts are provided by residues Gly-166 and 186–187 (VS).

Belongs to the thiamine-phosphate synthase family. Mg(2+) is required as a cofactor.

The catalysed reaction is 2-[(2R,5Z)-2-carboxy-4-methylthiazol-5(2H)-ylidene]ethyl phosphate + 4-amino-2-methyl-5-(diphosphooxymethyl)pyrimidine + 2 H(+) = thiamine phosphate + CO2 + diphosphate. It carries out the reaction 2-(2-carboxy-4-methylthiazol-5-yl)ethyl phosphate + 4-amino-2-methyl-5-(diphosphooxymethyl)pyrimidine + 2 H(+) = thiamine phosphate + CO2 + diphosphate. The enzyme catalyses 4-methyl-5-(2-phosphooxyethyl)-thiazole + 4-amino-2-methyl-5-(diphosphooxymethyl)pyrimidine + H(+) = thiamine phosphate + diphosphate. Its pathway is cofactor biosynthesis; thiamine diphosphate biosynthesis; thiamine phosphate from 4-amino-2-methyl-5-diphosphomethylpyrimidine and 4-methyl-5-(2-phosphoethyl)-thiazole: step 1/1. Its function is as follows. Condenses 4-methyl-5-(beta-hydroxyethyl)thiazole monophosphate (THZ-P) and 2-methyl-4-amino-5-hydroxymethyl pyrimidine pyrophosphate (HMP-PP) to form thiamine monophosphate (TMP). In Escherichia coli O139:H28 (strain E24377A / ETEC), this protein is Thiamine-phosphate synthase.